The following is a 216-amino-acid chain: MNFLLTWIHWGLAALLYFHNAKVLQAAPAQGDGDRQQSEVIPFMTVYERSVCRPIETMVDIFQDYPDEVEYILKPPCVALMRCGGCCNDEALECVPTELYNVTMEIMKLKPYQSQHIHPMSFQQHSKCECRPKKETRIIQEKKSKREKGKGQKRKRKRGRYKPQNFHCEPCSERRKHLYKQDPLTCKCSCKFTDSRCKSKQLELNERTCRCEKPRR.

A signal peptide spans 1–26; it reads MNFLLTWIHWGLAALLYFHNAKVLQA. Cystine bridges form between Cys52-Cys94, Cys83-Cys128, and Cys87-Cys130. Residue Asn101 is glycosylated (N-linked (GlcNAc...) asparagine). The disordered stretch occupies residues 140 to 161; it reads QEKKSKREKGKGQKRKRKRGRY. Basic residues predominate over residues 145-161; it reads KREKGKGQKRKRKRGRY.

This sequence belongs to the PDGF/VEGF growth factor family. As to quaternary structure, homodimer; disulfide-linked. Also found as heterodimer with PGF. Interacts to the FLT1/VEGFR1 and KDR/VEGFR2 receptors, heparan sulfate and heparin. As to expression, expressed in venom gland, heart, brain, liver, skeletal muscle and kidney.

It is found in the secreted. In terms of biological role, growth factor active in angiogenesis, vasculogenesis and endothelial cell growth. Induces endothelial cell proliferation, promotes cell migration, inhibits apoptosis and induces permeabilization of blood vessels. The protein is Vascular endothelial growth factor A of Protobothrops flavoviridis (Habu).